Here is a 100-residue protein sequence, read N- to C-terminus: Putative septation protein SpoVG (100 aa).

The protein belongs to the SpoVG family.

Could be involved in septation. This Staphylococcus aureus (strain JH1) protein is Putative septation protein SpoVG.